The sequence spans 83 residues: NAD(P)H-quinone oxidoreductase subunit L (83 aa).

Transmembrane regions (helical) follow at residues 18 to 38 (IGGY…LLFF) and 53 to 73 (FSVY…APFL).

The protein belongs to the complex I NdhL subunit family. NDH-1 can be composed of about 15 different subunits; different subcomplexes with different compositions have been identified which probably have different functions.

Its subcellular location is the cellular thylakoid membrane. It catalyses the reaction a plastoquinone + NADH + (n+1) H(+)(in) = a plastoquinol + NAD(+) + n H(+)(out). It carries out the reaction a plastoquinone + NADPH + (n+1) H(+)(in) = a plastoquinol + NADP(+) + n H(+)(out). In terms of biological role, NDH-1 shuttles electrons from an unknown electron donor, via FMN and iron-sulfur (Fe-S) centers, to quinones in the respiratory and/or the photosynthetic chain. The immediate electron acceptor for the enzyme in this species is believed to be plastoquinone. Couples the redox reaction to proton translocation, and thus conserves the redox energy in a proton gradient. Cyanobacterial NDH-1 also plays a role in inorganic carbon-concentration. The chain is NAD(P)H-quinone oxidoreductase subunit L from Synechococcus sp. (strain CC9311).